The sequence spans 215 residues: Probable transaldolase (215 aa).

The active-site Schiff-base intermediate with substrate is K83.

It belongs to the transaldolase family. Type 3B subfamily.

Its subcellular location is the cytoplasm. It catalyses the reaction D-sedoheptulose 7-phosphate + D-glyceraldehyde 3-phosphate = D-erythrose 4-phosphate + beta-D-fructose 6-phosphate. Its pathway is carbohydrate degradation; pentose phosphate pathway; D-glyceraldehyde 3-phosphate and beta-D-fructose 6-phosphate from D-ribose 5-phosphate and D-xylulose 5-phosphate (non-oxidative stage): step 2/3. In terms of biological role, transaldolase is important for the balance of metabolites in the pentose-phosphate pathway. This Clostridium acetobutylicum (strain ATCC 824 / DSM 792 / JCM 1419 / IAM 19013 / LMG 5710 / NBRC 13948 / NRRL B-527 / VKM B-1787 / 2291 / W) protein is Probable transaldolase (tal).